A 127-amino-acid chain; its full sequence is Two-component response regulator ORR41 (127 aa).

The region spanning 7 to 125 (RVLLVEDEEI…KLGVILAKFR (119 aa)) is the Response regulatory domain. D60 bears the 4-aspartylphosphate mark.

The protein belongs to the ARR family. Type-C subfamily. Two-component system major event consists of a His-to-Asp phosphorelay between a sensor histidine kinase (HK) and a response regulator (RR). In plants, the His-to-Asp phosphorelay involves an additional intermediate named Histidine-containing phosphotransfer protein (HPt). This multistep phosphorelay consists of a His-Asp-His-Asp sequential transfer of a phosphate group between first a His and an Asp of the HK protein, followed by the transfer to a conserved His of the HPt protein and finally the transfer to an Asp in the receiver domain of the RR protein.

Its function is as follows. Functions as a response regulator involved in His-to-Asp phosphorelay signal transduction system. Phosphorylation of the Asp residue in the receiver domain activates the ability of the protein to promote the transcription of target genes. May directly activate some type-A response regulators in response to cytokinins. The protein is Two-component response regulator ORR41 of Oryza sativa subsp. japonica (Rice).